The sequence spans 871 residues: Metabotropic glutamate receptor 6 (871 aa).

The first 23 residues, methionine 1 to glycine 23, serve as a signal peptide directing secretion. At alanine 24 to tryptophan 579 the chain is on the extracellular side. An intrachain disulfide couples cysteine 51 to cysteine 93. Residues serine 148, alanine 169–threonine 171, and tyrosine 219 each bind L-glutamate. Disulfide bonds link cysteine 238/cysteine 530, cysteine 361/cysteine 377, cysteine 417/cysteine 424, cysteine 512/cysteine 531, cysteine 516/cysteine 534, cysteine 537/cysteine 549, and cysteine 552/cysteine 565. Asparagine 290 carries an N-linked (GlcNAc...) asparagine glycan. Aspartate 301 serves as a coordination point for L-glutamate. Lysine 394 provides a ligand contact to L-glutamate. 2 N-linked (GlcNAc...) asparagine glycosylation sites follow: asparagine 445 and asparagine 473. Asparagine 561 is a glycosylation site (N-linked (GlcNAc...) asparagine). A helical transmembrane segment spans residues alanine 580–methionine 602. Residues arginine 603–glutamate 616 are Cytoplasmic-facing. The helical transmembrane segment at leucine 617 to alanine 637 threads the bilayer. Residues glutamate 638–arginine 648 are Extracellular-facing. The chain crosses the membrane as a helical span at residues leucine 649–asparagine 667. Topologically, residues arginine 668–glutamine 691 are cytoplasmic. The helical transmembrane segment at leucine 692–alanine 712 threads the bilayer. The Extracellular portion of the chain corresponds to glutamine 713–aspartate 742. Residues leucine 743 to isoleucine 764 form a helical membrane-spanning segment. Topologically, residues lysine 765–lysine 777 are cytoplasmic. Residues proline 778–threonine 800 form a helical membrane-spanning segment. Topologically, residues alanine 801–threonine 813 are extracellular. A helical membrane pass occupies residues leucine 814–phenylalanine 839. The Cytoplasmic portion of the chain corresponds to histidine 840–lysine 871. The disordered stretch occupies residues arginine 848–lysine 871.

This sequence belongs to the G-protein coupled receptor 3 family. Homodimer. Interacts with GPR179. Interacts with photoreceptor synaptic protein LRIT1 (via its N-terminal extracellular domain). In terms of tissue distribution, detected in the outer plexiform layer in retina (at protein level).

The protein resides in the cell membrane. Its subcellular location is the endoplasmic reticulum membrane. It localises to the golgi apparatus membrane. It is found in the cell projection. The protein localises to the dendrite. G-protein coupled receptor for glutamate. Ligand binding causes a conformation change that triggers signaling via guanine nucleotide-binding proteins (G proteins) and modulates the activity of down-stream effectors, such as adenylate cyclase. Signaling inhibits adenylate cyclase activity. Signaling stimulates TRPM1 channel activity and Ca(2+) uptake. Required for normal vision. The chain is Metabotropic glutamate receptor 6 (Grm6) from Mus musculus (Mouse).